Consider the following 245-residue polypeptide: Small ribosomal subunit protein uS3 (245 aa).

The region spanning Leu21–Ala92 is the KH type-2 domain. Positions Glu215–Ala245 are disordered.

This sequence belongs to the universal ribosomal protein uS3 family.

It localises to the cytoplasm. The protein localises to the nucleus. The protein resides in the nucleolus. It is found in the mitochondrion inner membrane. Its subcellular location is the cytoskeleton. It localises to the spindle. The enzyme catalyses 2'-deoxyribonucleotide-(2'-deoxyribose 5'-phosphate)-2'-deoxyribonucleotide-DNA = a 3'-end 2'-deoxyribonucleotide-(2,3-dehydro-2,3-deoxyribose 5'-phosphate)-DNA + a 5'-end 5'-phospho-2'-deoxyribonucleoside-DNA + H(+). Component of the small ribosomal subunit. The ribosome is a large ribonucleoprotein complex responsible for the synthesis of proteins in the cell. Has endonuclease activity and plays a role in repair of damaged DNA. Also involved in other processes including regulation of transcription, translation of its cognate mRNA, spindle formation and chromosome movement during mitosis, and apoptosis. This Ictalurus punctatus (Channel catfish) protein is Small ribosomal subunit protein uS3 (rps3).